The chain runs to 146 residues: Putative type II restriction enzyme MjaORF1200P (146 aa).

This sequence to A.pernix APE2001.

It catalyses the reaction Endonucleolytic cleavage of DNA to give specific double-stranded fragments with terminal 5'-phosphates.. Functionally, a putative type II restriction enzyme, its methylase would be M.MjaORF1200P (AC Q58600). This Methanocaldococcus jannaschii (strain ATCC 43067 / DSM 2661 / JAL-1 / JCM 10045 / NBRC 100440) (Methanococcus jannaschii) protein is Putative type II restriction enzyme MjaORF1200P.